A 357-amino-acid chain; its full sequence is tRNA N6-adenosine threonylcarbamoyltransferase (357 aa).

Fe cation-binding residues include H115 and H119. Substrate-binding positions include 137–141, D170, G183, and N281; that span reads LASGG. D309 is a Fe cation binding site.

The protein belongs to the KAE1 / TsaD family. Fe(2+) serves as cofactor.

It localises to the cytoplasm. The enzyme catalyses L-threonylcarbamoyladenylate + adenosine(37) in tRNA = N(6)-L-threonylcarbamoyladenosine(37) in tRNA + AMP + H(+). Required for the formation of a threonylcarbamoyl group on adenosine at position 37 (t(6)A37) in tRNAs that read codons beginning with adenine. Is involved in the transfer of the threonylcarbamoyl moiety of threonylcarbamoyl-AMP (TC-AMP) to the N6 group of A37, together with TsaE and TsaB. TsaD likely plays a direct catalytic role in this reaction. This is tRNA N6-adenosine threonylcarbamoyltransferase from Nitrobacter winogradskyi (strain ATCC 25391 / DSM 10237 / CIP 104748 / NCIMB 11846 / Nb-255).